The following is a 396-amino-acid chain: MIISAASDYRAAAQRTLPPFLFHYIDGGAYAEYTLRRNVEDLSQVALRQRVLKNMSDLSLETTLFNETLSMPVALAPVGLCGMYARRGEVQAAAAADAKGIPFTLSTVSVCPIEEVAPTLKRPMWFQLYVLRDRGFMRNALERAKAAGCSTLVFTVDMPTPGARYRDAHSGMSGPNAAMRRYWQAVMHPKWAWDVGLNGRPHDLGNISAYLGKPTGLEDYIGWLANNFDPSISWKDLEWIREFWDGPMVIKGILDPEDARDAVRFGADGIVVSNHGGRQLDGVLSSARALPAIADAVKGDIAILADSGIRNGLDVVRMIALGADTVLLGRAYLYALATAGKAGVANLLDLIEKEMKVAMTLTGAKSISEISGDSLVQELGRSLPAALAPMSKGDAA.

The FMN hydroxy acid dehydrogenase domain maps to 1–380 (MIISAASDYR…SGDSLVQELG (380 aa)). Y24 is a binding site for substrate. Residues S106 and Q127 each coordinate FMN. Residue Y129 coordinates substrate. T155 is a binding site for FMN. R164 is a substrate binding site. K251 is a binding site for FMN. The active-site Proton acceptor is the H275. R278 contributes to the substrate binding site. Residue 306 to 330 (DSGIRNGLDVVRMIALGADTVLLGR) coordinates FMN.

It belongs to the FMN-dependent alpha-hydroxy acid dehydrogenase family. FMN is required as a cofactor.

It localises to the cell inner membrane. The enzyme catalyses (S)-lactate + A = pyruvate + AH2. Catalyzes the conversion of L-lactate to pyruvate. Is coupled to the respiratory chain. The chain is L-lactate dehydrogenase from Salmonella schwarzengrund (strain CVM19633).